The chain runs to 342 residues: Thiosulfate/3-mercaptopyruvate sulfurtransferase 2 (342 aa).

2 Rhodanese domains span residues 56–173 and 224–338; these read GDAD…DVES and EDKT…LPIV. The active-site Cysteine persulfide intermediate is the Cys298.

Expressed in roots, rosette and cauline leaves, stems, flowers and siliques.

It is found in the cytoplasm. It catalyses the reaction thiosulfate + hydrogen cyanide = thiocyanate + sulfite + 2 H(+). The enzyme catalyses 2-oxo-3-sulfanylpropanoate + [thioredoxin]-dithiol = [thioredoxin]-disulfide + hydrogen sulfide + pyruvate + H(+). In terms of biological role, catalyzes the transfer of a sulfur ion from a donor to cyanide or to other thiol compounds. Substrate preference is 3-mercaptopyruvate &gt; thiosulfate. Involved in embryo and seed development. In Arabidopsis thaliana (Mouse-ear cress), this protein is Thiosulfate/3-mercaptopyruvate sulfurtransferase 2 (STR2).